The following is a 269-amino-acid chain: RBPJ-interacting and tubulin-associated protein 1 (269 aa).

The short motif at 5 to 17 is the Nuclear export signal element; the sequence is VELAVSGMQTLGL. Disordered regions lie at residues 66–105 and 141–269; these read VGKE…PISH and LWTP…PPWK. The segment covering 80–92 has biased composition (polar residues); it reads CETTPSRGSTPTL. Positions 92 to 108 match the Nuclear localization signal motif; it reads LTPRKKNKYRPISHTPS. Positions 128–156 are interaction with RBPJ/RBPSUH; it reads RMAKGDAAKLRALLWTPPPTPRGSHSPRP. The interval 156-269 is interaction with tubulin; the sequence is PREAPLRAIH…ATQKPKPPWK (114 aa). Residues 200-253 are compositionally biased toward polar residues; the sequence is HSLTHLNVPSTGHPATSAPHTNGPQDLRPSTSGVTFRSPLVTSRARSVSISVPS.

Belongs to the RITA family. As to quaternary structure, interacts with RBPJ/RBPSUH.

Its subcellular location is the cytoplasm. The protein resides in the nucleus. The protein localises to the cytoskeleton. It localises to the microtubule organizing center. It is found in the centrosome. Its function is as follows. Tubulin-binding protein that acts as a negative regulator of Notch signaling pathway. Shuttles between the cytoplasm and the nucleus and mediates the nuclear export of RBPJ/RBPSUH, thereby preventing the interaction between RBPJ/RBPSUH and NICD product of Notch proteins (Notch intracellular domain), leading to down-regulate Notch-mediated transcription. May play a role in neurogenesis. The protein is RBPJ-interacting and tubulin-associated protein 1 (RITA1) of Homo sapiens (Human).